The primary structure comprises 348 residues: Protein RecA (348 aa).

ATP is bound at residue 65–72 (GPESSGKT). The interval 328-348 (SKPQAETSARLATQEELADDY) is disordered.

This sequence belongs to the RecA family.

It is found in the cytoplasm. Can catalyze the hydrolysis of ATP in the presence of single-stranded DNA, the ATP-dependent uptake of single-stranded DNA by duplex DNA, and the ATP-dependent hybridization of homologous single-stranded DNAs. It interacts with LexA causing its activation and leading to its autocatalytic cleavage. This Ectopseudomonas oleovorans (Pseudomonas oleovorans) protein is Protein RecA.